The sequence spans 227 residues: uncharacterized protein (227 aa).

The first 22 residues, 1-22 (MDSVMRKSLFLLLPLVVTNAHA), serve as a signal peptide directing secretion.

This is an uncharacterized protein from Salmonella typhi.